The primary structure comprises 631 residues: MSEQTANKETRGFQSEVKQLLHLMIHSLYSNKEIFLRELISNASDASDKLRFKALSNGDLYEGNADLGVKLSFNEAANTLTISDNGIGMSREDVIEHLGTIAKSGTADFFSKLSEDQSKDSQLIGQFGVGFYSAFIVADAVTVRTRAAGSEKDQGVQWHSEGEGDYTIEDITKESRGTDIILHMREEGKEFLNEWRLKEVIGKYSDHIGIPVSIWTVEKDEEGKDKEGKWEQVNKAQALWTRSKSDIEDAEYQEFYKHVSHDFADPLTWSHNKVEGKNDYTSLLYIPAKAPFDMMNRDHKSGLKLYVQRVFIMDDAEQFMPTYLRFVKGLIDSNDLPLNVSREILQDNKVTQSLRSACTKRVLGMLEKMAKKDDEKYLTFWKQFGQVLKEGLAEDLANKEKIAGLLRFATTEKDSSEQALGLAGYVERMKEEQDKIFYLTADSYAAAKNSPHLEQFKAKGIEVVLMYDRIDEWLMSYLTEFDGKQFQSITKAGLDLSKFEDEAEKEKHKETEEEFKSVVERTKSYLGDRVKEVRTTFKLATTPAVVVTDDFEMGTQMAKLLEAAGQAAPEVKYIFEINPDHALVKQMADEADEEAFGRWVEMLLGQAMLAERGSLEDPSQFLSAMNQLLAK.

The segment at methionine 1 to arginine 342 is a; substrate-binding. Positions glutamate 343–lysine 559 are b. The tract at residues leucine 560–lysine 631 is c.

This sequence belongs to the heat shock protein 90 family. In terms of assembly, homodimer.

The protein resides in the cytoplasm. Its function is as follows. Molecular chaperone. Has ATPase activity. The sequence is that of Chaperone protein HtpG from Aliivibrio fischeri (strain ATCC 700601 / ES114) (Vibrio fischeri).